The chain runs to 44 residues: Capsid protein G8P (44 aa).

Ser-1 bears the N-acetylserine; by host mark. Topologically, residues 1-19 (SGVGDGVDVVSAIEGAAGP) are periplasmic. The chain crosses the membrane as a helical span at residues 20–37 (IAAIGGAVLTVMVGIKVY). Residues 38-44 (KWVRRAM) are Cytoplasmic-facing.

The protein belongs to the inovirus capsid protein family. As to quaternary structure, homomultimerizes. There are several thousands of this protein in the phage capsid.

Its subcellular location is the virion. The protein localises to the host membrane. Self assembles to form a helical capsid wrapping up the viral genomic DNA. The capsid displays a filamentous structure with a length of 760-1950 nm and a width of 6-8 nm. The virion assembly and budding take place at the host inner membrane. The sequence is that of Capsid protein G8P (VIII) from Xanthomonas campestris pv. oryzae (Bacteriophage Xf).